The following is a 370-amino-acid chain: Uroporphyrinogen decarboxylase (370 aa).

Residues R29–R33, D79, Y155, S210, and H342 each bind substrate.

It belongs to the uroporphyrinogen decarboxylase family. In terms of assembly, homodimer.

The protein resides in the cytoplasm. It carries out the reaction uroporphyrinogen III + 4 H(+) = coproporphyrinogen III + 4 CO2. It functions in the pathway porphyrin-containing compound metabolism; protoporphyrin-IX biosynthesis; coproporphyrinogen-III from 5-aminolevulinate: step 4/4. In terms of biological role, catalyzes the decarboxylation of four acetate groups of uroporphyrinogen-III to yield coproporphyrinogen-III. This chain is Uroporphyrinogen decarboxylase, found in Acidovorax ebreus (strain TPSY) (Diaphorobacter sp. (strain TPSY)).